Consider the following 93-residue polypeptide: Small ribosomal subunit protein uS19 (93 aa).

The protein belongs to the universal ribosomal protein uS19 family.

Protein S19 forms a complex with S13 that binds strongly to the 16S ribosomal RNA. This is Small ribosomal subunit protein uS19 from Acidothermus cellulolyticus (strain ATCC 43068 / DSM 8971 / 11B).